A 763-amino-acid polypeptide reads, in one-letter code: Phosphoglycerol transferase I (763 aa).

4 helical membrane passes run 1 to 21 (MSEL…AWKA), 26 to 46 (WWFA…ITLY), 77 to 97 (ILPG…LGWV), and 108 to 128 (VGYS…SPAF).

It belongs to the OpgB family.

It localises to the cell inner membrane. It catalyses the reaction a phosphatidylglycerol + a membrane-derived-oligosaccharide D-glucose = a 1,2-diacyl-sn-glycerol + a membrane-derived-oligosaccharide 6-(glycerophospho)-D-glucose.. Its pathway is glycan metabolism; osmoregulated periplasmic glucan (OPG) biosynthesis. Transfers a phosphoglycerol residue from phosphatidylglycerol to the membrane-bound nascent glucan backbones. In Salmonella choleraesuis (strain SC-B67), this protein is Phosphoglycerol transferase I.